We begin with the raw amino-acid sequence, 404 residues long: MSHKIMAINAGSSSLKFQLLAMPQGEMICQGLIERIGMSDAQVTLKAPAQKWQETLPVADHREAVTLLLEKLLSHNIISSLEEIDGVGHRVAHGGESFKDSARVTDETLAEIERLAELAPLHNPVNALGIAVFRQLLPKTPAVAVFDTAFHQTLDEPSFIYPLPWRYYSELGIRRYGFHGTSHKYVSAQLAEKLGVPLSALRVVCCHLGNGSSICAIKGGHSVNTSMGFTPQSGVMMGTRSGDIDPSILPWIALREGKTPQQLNQLLNNESGLLGVSGVSPDYRDVEHAADTGNHQAALALTLFAERIRATIGSYIMQMGGLDALVFTGGIGENSARARAAICHNLNFLGLAVDEEKNQRNATFIQTENAVVKVAVINTNEELMIAQDVMRLAISETVTLGIPA.

This sequence belongs to the acetokinase family. PduW subfamily.

It localises to the cytoplasm. It carries out the reaction propanoate + ATP = propanoyl phosphate + ADP. The protein operates within polyol metabolism; 1,2-propanediol degradation. Works with phosphate acetyltransferase (pta) to capture exogenous propionate and regenerate propionyl-CoA during degradation of 1,2-propanediol (1,2-PD). Functionally, expression of a cosmid containing the full 21-gene pdu operon in E.coli allows E.coli to grow on 1,2-propanediol (1,2-PD) with the appearance of bacterial microcompartments (BMC) in its cytoplasm. This Citrobacter freundii protein is Propionate kinase.